A 51-amino-acid chain; its full sequence is Insulin (51 aa).

Disulfide bonds link cysteine 8–cysteine 37, cysteine 20–cysteine 50, and cysteine 36–cysteine 41.

Belongs to the insulin family. Heterodimer of a B chain and an A chain linked by two disulfide bonds.

Its subcellular location is the secreted. Insulin decreases blood glucose concentration. It increases cell permeability to monosaccharides, amino acids and fatty acids. It accelerates glycolysis, the pentose phosphate cycle, and glycogen synthesis in liver. The protein is Insulin (ins) of Gadus morhua subsp. callarias (Baltic cod).